Reading from the N-terminus, the 1273-residue chain is Ras-specific guanine nucleotide-releasing factor 1 (1273 aa).

The PH 1 domain occupies 22 to 129 (DGTRKGYLSK…WVAAIAHASY (108 aa)). The IQ domain maps to 204 to 229 (KKIKKVQSFLRGWLCRRKWKTIIQDY). One can recognise a DH domain in the interval 240–426 (KRNQVVFSML…EELSRIMHDE (187 aa)). One can recognise a PH 2 domain in the interval 467–584 (PMSEKGKITR…WTSDISQCVD (118 aa)). Residues serine 577 and serine 626 each carry the phosphoserine; by PLK2 modification. One can recognise an N-terminal Ras-GEF domain in the interval 644 to 761 (KVLQIRYASV…SRRRKLSLNI (118 aa)). The segment at 724–754 (YGEPPKSPRATRKFSSPPPLSITKTSSPSRR) is disordered. Serine 758 is modified (phosphoserine). Serine 779 and serine 800 each carry phosphoserine; by PLK2. The disordered stretch occupies residues 809-874 (TNKIPDEGDT…PKSVKNKNSS (66 aa)). Positions 842 to 854 (SDIDQNQSDDGDT) are enriched in acidic residues. Residues 855–867 (ETSPTKSPTTPKS) are compositionally biased toward low complexity. The Ras-GEF domain maps to 1038–1270 (SALEIAEQLT…YESSLRIEPK (233 aa)).

As to quaternary structure, homooligomer and heterooligomer with RASGRF2. Interacts with USP8, thereby regulating its stability. Post-translationally, phosphorylated by PLK2, leading to ubiquitination and degradation by the proteasome. Ubiquitinated and degraded following phosphorylation by PLK2. In terms of processing, phosphorylated by SRC and LCK. Phosphorylation by LCK increases its capacity to stimulate the GDP/GTP exchange on Ras, whereas its phosphorylation by SRC seems not to have an effect on stimulation activity.

Promotes the exchange of Ras-bound GDP by GTP. In Homo sapiens (Human), this protein is Ras-specific guanine nucleotide-releasing factor 1 (RASGRF1).